A 214-amino-acid chain; its full sequence is Phosphoenolpyruvate guanylyltransferase (214 aa).

The phosphoenolpyruvate site is built by Thr148, Gly163, and Ser166.

It belongs to the CofC family.

The enzyme catalyses phosphoenolpyruvate + GTP + H(+) = enolpyruvoyl-2-diphospho-5'-guanosine + diphosphate. It participates in cofactor biosynthesis; coenzyme F420 biosynthesis. Guanylyltransferase that catalyzes the activation of phosphoenolpyruvate (PEP) as enolpyruvoyl-2-diphospho-5'-guanosine, via the condensation of PEP with GTP. It is involved in the biosynthesis of coenzyme F420, a hydride carrier cofactor. This is Phosphoenolpyruvate guanylyltransferase from Mycolicibacterium gilvum (strain PYR-GCK) (Mycobacterium gilvum (strain PYR-GCK)).